The sequence spans 137 residues: Fluoride-specific ion channel FluC 1 (137 aa).

4 helical membrane passes run leucine 4–glycine 24, leucine 37–isoleucine 57, isoleucine 62–phenylalanine 82, and isoleucine 100–tyrosine 120. Residues glycine 77 and threonine 80 each coordinate Na(+).

This sequence belongs to the fluoride channel Fluc/FEX (TC 1.A.43) family.

It localises to the cell membrane. The catalysed reaction is fluoride(in) = fluoride(out). With respect to regulation, na(+) is not transported, but it plays an essential structural role and its presence is essential for fluoride channel function. In terms of biological role, fluoride-specific ion channel. Important for reducing fluoride concentration in the cell, thus reducing its toxicity. This is Fluoride-specific ion channel FluC 1 from Bacillus cereus (strain ATCC 10987 / NRS 248).